Reading from the N-terminus, the 340-residue chain is Small ribosomal subunit biogenesis GTPase RsgA (340 aa).

Residues 20–34 (ERAERAERRARRDDT) show a composition bias toward basic and acidic residues. The disordered stretch occupies residues 20–42 (ERAERAERRARRDDTSLDAGDYG). The region spanning 116–274 (RGQLKPVAAN…LIDSPGIREF (159 aa)) is the CP-type G domain. GTP contacts are provided by residues 163–166 (NKTD) and 216–224 (GQSGVGKSS). Positions 298, 303, 305, and 311 each coordinate Zn(2+).

Belongs to the TRAFAC class YlqF/YawG GTPase family. RsgA subfamily. Monomer. Associates with 30S ribosomal subunit, binds 16S rRNA. Zn(2+) serves as cofactor.

The protein resides in the cytoplasm. In terms of biological role, one of several proteins that assist in the late maturation steps of the functional core of the 30S ribosomal subunit. Helps release RbfA from mature subunits. May play a role in the assembly of ribosomal proteins into the subunit. Circularly permuted GTPase that catalyzes slow GTP hydrolysis, GTPase activity is stimulated by the 30S ribosomal subunit. This Chromohalobacter salexigens (strain ATCC BAA-138 / DSM 3043 / CIP 106854 / NCIMB 13768 / 1H11) protein is Small ribosomal subunit biogenesis GTPase RsgA.